A 409-amino-acid polypeptide reads, in one-letter code: Ubiquitin-associated domain-containing protein 1 (409 aa).

Met-1 carries the N-acetylmethionine modification. A Ubiquitin-like domain is found at 14–98 (LRLHICAADG…LLLIKKRAPS (85 aa)). One can recognise a UBA 1 domain in the interval 187–231 (DEDERVDETALRQLTEMGFPESRASKALRLNHMSVPQAMEWLIEH). The tract at residues 235–273 (PAIDTPLPGHAAQAEASAAAATSSSSSEAAVGTSVEDEE) is disordered. Residues 245–264 (AAQAEASAAAATSSSSSEAA) are compositionally biased toward low complexity. Residues 292–332 (RADARAVISLMEMGFDEKEVIDALRVNNNQQNAACEWLLGD) form the UBA 2 domain. Residues 357–396 (NPVVQLGLTNPKTLLAFEDMLENPLNSTQWMNDPETGPVM) form the STI1 domain.

In terms of assembly, component of the KPC complex composed of RNF123/KPC1 and UBAC1/KPC2. Interacts (via ubiquitin-like domain) with RNF123. Interacts (via ubiquitin-like and UBA domains) with the proteasome via its N-terminal domain.

It localises to the cytoplasm. It participates in protein modification; protein ubiquitination. In terms of biological role, non-catalytic component of the KPC complex, a E3 ubiquitin-protein ligase complex that mediates polyubiquitination of target proteins, such as CDKN1B and NFKB1. The KPC complex catalyzes polyubiquitination and proteasome-mediated degradation of CDKN1B during G1 phase of the cell cycle. The KPC complex also acts as a key regulator of the NF-kappa-B signaling by promoting maturation of the NFKB1 component of NF-kappa-B by catalyzing ubiquitination of the NFKB1 p105 precursor. Within the KPC complex, UBAC1 acts as an adapter that promotes the transfer of target proteins that have been polyubiquitinated by RNF123/KPC1 to the 26S proteasome. This is Ubiquitin-associated domain-containing protein 1 (Ubac1) from Rattus norvegicus (Rat).